We begin with the raw amino-acid sequence, 238 residues long: ATP-dependent dethiobiotin synthetase BioD (238 aa).

12-17 contacts ATP; that stretch reads GVGKTV. Thr-16 contacts Mg(2+). Residue Lys-37 is part of the active site. Thr-41 is a binding site for substrate. ATP-binding positions include Asp-50, 109–112, 170–171, and 200–202; these read EGAG, GS, and PAG. Residues Asp-50 and Glu-109 each coordinate Mg(2+).

It belongs to the dethiobiotin synthetase family. Homodimer. Mg(2+) is required as a cofactor.

The protein localises to the cytoplasm. It catalyses the reaction (7R,8S)-7,8-diammoniononanoate + CO2 + ATP = (4R,5S)-dethiobiotin + ADP + phosphate + 3 H(+). It participates in cofactor biosynthesis; biotin biosynthesis; biotin from 7,8-diaminononanoate: step 1/2. In terms of biological role, catalyzes a mechanistically unusual reaction, the ATP-dependent insertion of CO2 between the N7 and N8 nitrogen atoms of 7,8-diaminopelargonic acid (DAPA, also called 7,8-diammoniononanoate) to form a ureido ring. In Frankia casuarinae (strain DSM 45818 / CECT 9043 / HFP020203 / CcI3), this protein is ATP-dependent dethiobiotin synthetase BioD.